The following is a 543-amino-acid chain: Neurofilament light polypeptide (543 aa).

N-acetylserine is present on Ser2. Residues 2 to 92 form a head region; the sequence is SSFSYEPYYS…LKSIRTQEKA (91 aa). Residue Thr21 is glycosylated (O-linked (GlcNAc) threonine). Residue Arg23 is modified to Asymmetric dimethylarginine; alternate. Arg23 carries the post-translational modification Omega-N-methylarginine; alternate. Ser27 carries O-linked (GlcNAc) serine glycosylation. Position 30 is an omega-N-methylarginine (Arg30). Residue Tyr43 is modified to Phosphotyrosine. Ser56, Ser67, and Ser103 each carry phosphoserine. One can recognise an IF rod domain in the interval 90 to 400; that stretch reads EKAQLQDLND…KLLEGEETRL (311 aa). The interval 93 to 124 is coil 1A; the sequence is QLQDLNDRFASFIERVHELEQQNKVLEAELLV. The interval 125 to 137 is linker 1; sequence LRQKHSEPSRFRA. A coil 1B region spans residues 138-234; that stretch reads LYEQEIRDLR…KVHEEEIAEL (97 aa). Positions 235 to 252 are linker 12; that stretch reads QAQIQYAQISVEMDVTKP. Residues 253–271 form a coil 2A region; it reads DLSAALKDIRAQYEKLAAK. Residues 272–280 form a linker 2 region; sequence NMQNAEEWF. Residues 281 to 396 form a coil 2B region; sequence KSRFTVLTES…AAYRKLLEGE (116 aa). Positions 381–391 are epitope; recognized by IF-specific monoclonal antibody; it reads ALDIEIAAYRK. A tail, subdomain A region spans residues 397-443; the sequence is ETRLSFTSVGSITSGYSQSSQVFGRSAYGGLQTSSYLMSTRSFPSYY. The tract at residues 397 to 543 is tail; it reads ETRLSFTSVG…GEEQAAKKKD (147 aa). Residues 444–543 are tail, subdomain B (acidic); sequence TSHVQEEQIE…GEEQAAKKKD (100 aa). The disordered stretch occupies residues 462-543; the sequence is KAEEAKDEPP…GEEQAAKKKD (82 aa). Residues 471 to 525 show a composition bias toward acidic residues; the sequence is PSEGEAEEEEKDKEEAEEEEAAEEEEAAKEESEEAKEEEEGGEGEEGEETKEAEE. Ser472 and Ser502 each carry phosphoserine. Thr520 carries the post-translational modification Phosphothreonine. Basic and acidic residues predominate over residues 526–543; that stretch reads EEKKVEGAGEEQAAKKKD.

Belongs to the intermediate filament family. In terms of assembly, forms homodimers (in vitro). Forms heterodimers with NEFH or NEFM; which can further hetero-oligomerize (in vitro). Forms heterodimers with INA (in vitro). Interacts with ARHGEF28. Interacts with TRIM2. In terms of processing, O-glycosylated. Phosphorylated in the head and rod regions by the PKC kinase PKN1, leading to the inhibition of polymerization. Post-translationally, ubiquitinated in the presence of TRIM2 and UBE2D1.

The protein localises to the cell projection. The protein resides in the axon. It localises to the cytoplasm. It is found in the cytoskeleton. Its function is as follows. Neurofilaments usually contain three intermediate filament proteins: NEFL, NEFM, and NEFH which are involved in the maintenance of neuronal caliber. May additionally cooperate with the neuronal intermediate filament proteins PRPH and INA to form neuronal filamentous networks. The protein is Neurofilament light polypeptide (NEFL) of Homo sapiens (Human).